A 504-amino-acid chain; its full sequence is Glutamate--tRNA ligase (504 aa).

A 'HIGH' region motif is present at residues 27–37 (PSPTGTPHVGL). A 'KMSKS' region motif is present at residues 271–275 (KLSKR). Residue Lys274 participates in ATP binding.

It belongs to the class-I aminoacyl-tRNA synthetase family. Glutamate--tRNA ligase type 1 subfamily. As to quaternary structure, monomer.

It is found in the cytoplasm. It catalyses the reaction tRNA(Glu) + L-glutamate + ATP = L-glutamyl-tRNA(Glu) + AMP + diphosphate. Its function is as follows. Catalyzes the attachment of glutamate to tRNA(Glu) in a two-step reaction: glutamate is first activated by ATP to form Glu-AMP and then transferred to the acceptor end of tRNA(Glu). The chain is Glutamate--tRNA ligase from Arthrobacter sp. (strain FB24).